Consider the following 282-residue polypeptide: Putative lactoylglutathione lyase (282 aa).

A2 carries the post-translational modification N-acetylalanine. VOC domains are found at residues 17-141 and 147-274; these read RFLH…LIQR and PLCQ…LVDN. H20 contacts Zn(2+). R24 contacts substrate. Zn(2+) is bound at residue E71. Residues N75 and H89 each coordinate substrate. H89 and E137 together coordinate Zn(2+). Residue E137 is the Proton donor/acceptor of the active site. 254–255 contacts substrate; the sequence is LG.

It belongs to the glyoxalase I family. Zn(2+) is required as a cofactor.

It carries out the reaction (R)-S-lactoylglutathione = methylglyoxal + glutathione. The protein operates within secondary metabolite metabolism; methylglyoxal degradation; (R)-lactate from methylglyoxal: step 1/2. Catalyzes the conversion of hemimercaptal, formed from methylglyoxal and glutathione, to S-lactoylglutathione. This is Putative lactoylglutathione lyase from Brassica oleracea var. gemmifera (Brussel sprouts).